The chain runs to 167 residues: Outer envelope pore protein 21A, chloroplastic (167 aa).

The Cytoplasmic segment spans residues 1–21; the sequence is METSLRYATNSRSLKIHAKEK. A beta stranded transmembrane segment spans residues 22–31; the sequence is FPVNSKTRLQ. Residues 32–55 are Chloroplast intermembrane-facing; it reads LHGELDTGAGVPSYFCAMIRYFFH. Residues 56 to 65 traverse the membrane as a beta stranded segment; it reads EASTNLGVGL. The Cytoplasmic segment spans residues 66-71; the sequence is HYDKRE. Residues 72–81 form a beta stranded membrane-spanning segment; it reads KLRCLVRGKK. Residues 82–87 lie on the Chloroplast intermembrane side of the membrane; it reads KFPVIT. A beta stranded transmembrane segment spans residues 88–97; sequence DEVVTFNIKG. The Cytoplasmic portion of the chain corresponds to 98–110; that stretch reads RCDFDQDLVQRNA. A beta stranded membrane pass occupies residues 111 to 120; sequence KGAAEFDWNI. The Chloroplast intermembrane portion of the chain corresponds to 121–127; that stretch reads WKFQKDQ. A beta stranded membrane pass occupies residues 128-137; it reads DLRLRIGYEM. Residues 138-142 are Cytoplasmic-facing; the sequence is FEKVP. The beta stranded transmembrane segment at 143–152 threads the bilayer; that stretch reads YMQIRENNWT. Residues 153 to 158 lie on the Chloroplast intermembrane side of the membrane; sequence FNTNLK. A beta stranded transmembrane segment spans residues 159–167; the sequence is GKWNVRYDL.

This sequence belongs to the plastid outer envelope porin OEP21 (TC 1.B.29) family.

The protein resides in the plastid. Its subcellular location is the etioplast membrane. It is found in the chloroplast outer membrane. In terms of biological role, voltage-dependent rectifying anion channel that facilitates the translocation between chloroplast and cytoplasm of phosphorylated carbohydrates such as triosephosphate, 3-phosphoglycerate and inorganic phosphate (Pi) depending of ATP to triosephosphate ratio in the plastidial intermembrane space; in high triosephosphate/ATP conditions (e.g. photosynthesis), export of triosphosphate from chloroplast (outward rectifying channels), but in high ATP/triosephosphate conditions (e.g. dark phase), import of phosphosolutes (inward rectifying channels). This chain is Outer envelope pore protein 21A, chloroplastic (OEP21A), found in Arabidopsis thaliana (Mouse-ear cress).